A 64-amino-acid chain; its full sequence is p7b (64 aa).

The Cytoplasmic portion of the chain corresponds to 1–12 (MECVCVDSSWPQ). Residues 13 to 30 (WLRNLILGILISSILFIL) traverse the membrane as a helical; Signal-anchor for type II membrane protein segment. The Lumenal portion of the chain corresponds to 31-64 (TKTQDTVAVYHEPSVYSIDQTQKFQKIDIHNGGK).

This sequence belongs to the gammacarmovirus double gene block protein 2 family.

Its subcellular location is the host endoplasmic reticulum membrane. Required for cell-to-cell movement of virions in the host plant together with p7a. This Maize chlorotic mottle virus (isolate United States/Kansas/1987) (MCMV) protein is p7b.